Reading from the N-terminus, the 123-residue chain is uncharacterized protein (123 aa).

2 disordered regions span residues 1-21 (MGAPGGKINRPRTELKKKLFK) and 82-123 (EKTA…EDES).

This is an uncharacterized protein from Homo sapiens (Human).